The following is a 393-amino-acid chain: NAD(P)H-quinone oxidoreductase subunit H, chloroplastic (393 aa).

It belongs to the complex I 49 kDa subunit family. In terms of assembly, NDH is composed of at least 16 different subunits, 5 of which are encoded in the nucleus.

The protein resides in the plastid. It is found in the chloroplast thylakoid membrane. It catalyses the reaction a plastoquinone + NADH + (n+1) H(+)(in) = a plastoquinol + NAD(+) + n H(+)(out). It carries out the reaction a plastoquinone + NADPH + (n+1) H(+)(in) = a plastoquinol + NADP(+) + n H(+)(out). Its function is as follows. NDH shuttles electrons from NAD(P)H:plastoquinone, via FMN and iron-sulfur (Fe-S) centers, to quinones in the photosynthetic chain and possibly in a chloroplast respiratory chain. The immediate electron acceptor for the enzyme in this species is believed to be plastoquinone. Couples the redox reaction to proton translocation, and thus conserves the redox energy in a proton gradient. The sequence is that of NAD(P)H-quinone oxidoreductase subunit H, chloroplastic from Liriodendron tulipifera (Tuliptree).